Reading from the N-terminus, the 608-residue chain is ESX-3 secretion system protein EccA3 (608 aa).

Positions 284-303 (EARSDPWDPETEPSEAEFVD) are disordered. Residues 290 to 301 (WDPETEPSEAEF) are compositionally biased toward acidic residues. 365-372 (GPPGTGKT) provides a ligand contact to ATP.

It belongs to the CbxX/CfxQ family. Part of the ESX-3 / type VII secretion system (T7SS), which is composed of cytosolic and membrane components.

The protein resides in the cytoplasm. In terms of biological role, part of the ESX-3 specialized secretion system, which is required for siderophore-mediated iron acquisition and for the secretion of EsxH and EsxG. EccA3 exhibits ATPase activity and may provide energy for the export of ESX-3 substrates. This is ESX-3 secretion system protein EccA3 from Mycolicibacterium smegmatis (strain ATCC 700084 / mc(2)155) (Mycobacterium smegmatis).